A 161-amino-acid polypeptide reads, in one-letter code: Regulator of ribonuclease activity A (161 aa).

It belongs to the RraA family. Homotrimer. Binds to both RNA-binding sites in the C-terminal region of Rne and to RhlB.

It is found in the cytoplasm. Its function is as follows. Globally modulates RNA abundance by binding to RNase E (Rne) and regulating its endonucleolytic activity. Can modulate Rne action in a substrate-dependent manner by altering the composition of the degradosome. Modulates RNA-binding and helicase activities of the degradosome. The sequence is that of Regulator of ribonuclease activity A from Edwardsiella ictaluri (strain 93-146).